We begin with the raw amino-acid sequence, 71 residues long: Large ribosomal subunit protein bL31 (71 aa).

Zn(2+)-binding residues include Cys16, Cys18, Cys37, and Cys40.

This sequence belongs to the bacterial ribosomal protein bL31 family. Type A subfamily. In terms of assembly, part of the 50S ribosomal subunit. It depends on Zn(2+) as a cofactor.

Its function is as follows. Binds the 23S rRNA. In Sodalis glossinidius (strain morsitans), this protein is Large ribosomal subunit protein bL31.